The following is a 317-amino-acid chain: 4-hydroxy-3-methylbut-2-enyl diphosphate reductase (317 aa).

C12 is a binding site for [4Fe-4S] cluster. (2E)-4-hydroxy-3-methylbut-2-enyl diphosphate-binding residues include H41 and H74. Residues H41 and H74 each contribute to the dimethylallyl diphosphate site. Residues H41 and H74 each contribute to the isopentenyl diphosphate site. Position 97 (C97) interacts with [4Fe-4S] cluster. (2E)-4-hydroxy-3-methylbut-2-enyl diphosphate is bound at residue H125. H125 is a dimethylallyl diphosphate binding site. H125 serves as a coordination point for isopentenyl diphosphate. E127 (proton donor) is an active-site residue. Position 168 (T168) interacts with (2E)-4-hydroxy-3-methylbut-2-enyl diphosphate. C198 serves as a coordination point for [4Fe-4S] cluster. Residues S226, S227, N228, and S270 each coordinate (2E)-4-hydroxy-3-methylbut-2-enyl diphosphate. Positions 226, 227, 228, and 270 each coordinate dimethylallyl diphosphate. S226, S227, N228, and S270 together coordinate isopentenyl diphosphate.

Belongs to the IspH family. As to quaternary structure, homodimer. [4Fe-4S] cluster serves as cofactor.

The enzyme catalyses isopentenyl diphosphate + 2 oxidized [2Fe-2S]-[ferredoxin] + H2O = (2E)-4-hydroxy-3-methylbut-2-enyl diphosphate + 2 reduced [2Fe-2S]-[ferredoxin] + 2 H(+). The catalysed reaction is dimethylallyl diphosphate + 2 oxidized [2Fe-2S]-[ferredoxin] + H2O = (2E)-4-hydroxy-3-methylbut-2-enyl diphosphate + 2 reduced [2Fe-2S]-[ferredoxin] + 2 H(+). It functions in the pathway isoprenoid biosynthesis; dimethylallyl diphosphate biosynthesis; dimethylallyl diphosphate from (2E)-4-hydroxy-3-methylbutenyl diphosphate: step 1/1. The protein operates within isoprenoid biosynthesis; isopentenyl diphosphate biosynthesis via DXP pathway; isopentenyl diphosphate from 1-deoxy-D-xylulose 5-phosphate: step 6/6. In terms of biological role, catalyzes the conversion of 1-hydroxy-2-methyl-2-(E)-butenyl 4-diphosphate (HMBPP) into a mixture of isopentenyl diphosphate (IPP) and dimethylallyl diphosphate (DMAPP). Acts in the terminal step of the DOXP/MEP pathway for isoprenoid precursor biosynthesis. The polypeptide is 4-hydroxy-3-methylbut-2-enyl diphosphate reductase (Yersinia pestis bv. Antiqua (strain Antiqua)).